Consider the following 229-residue polypeptide: Trypsin (229 aa).

The propeptide at 1–7 is activation peptide; that stretch reads APDDDDK. The Peptidase S1 domain occupies 8–227; it reads IVGGYECPKH…YVSWIHETIA (220 aa). 6 cysteine pairs are disulfide-bonded: cysteine 14–cysteine 143, cysteine 32–cysteine 48, cysteine 116–cysteine 216, cysteine 123–cysteine 189, cysteine 154–cysteine 168, and cysteine 179–cysteine 203. Histidine 47 serves as the catalytic Charge relay system. Ca(2+) contacts are provided by glutamate 59 and glutamate 69. Residue aspartate 91 is the Charge relay system of the active site. The Charge relay system role is filled by serine 183.

Belongs to the peptidase S1 family. Ca(2+) serves as cofactor.

It localises to the secreted. The protein localises to the extracellular space. The enzyme catalyses Preferential cleavage: Arg-|-Xaa, Lys-|-Xaa.. In Squalus acanthias (Spiny dogfish), this protein is Trypsin.